A 542-amino-acid chain; its full sequence is uncharacterized protein (542 aa).

5 consecutive transmembrane segments (helical) span residues 4-23 (ILRD…GYPL), 28-47 (IGGI…AFGA), 57-79 (IVYQ…HGFL), 86-108 (GVIY…LIPH), and 151-173 (PVVG…IYLA). RCK C-terminal domains are found at residues 186–270 (RTLK…VIGC) and 273–356 (EVQA…LGDS). 6 helical membrane-spanning segments follow: residues 365 to 384 (IAVL…VPIP), 389 to 408 (ITVR…FLGA), 415 to 437 (LVWV…IFLA), 457 to 479 (WAIL…YVGY), 484 to 506 (IPMG…LGFA), and 519 to 541 (YAMV…IAVL).

This sequence belongs to the AAE transporter (TC 2.A.81) family.

It is found in the cell membrane. This is an uncharacterized protein from Symbiobacterium thermophilum (strain DSM 24528 / JCM 14929 / IAM 14863 / T).